We begin with the raw amino-acid sequence, 110 residues long: Nucleoid-associated protein Ent638_0951 (110 aa).

The protein belongs to the YbaB/EbfC family. In terms of assembly, homodimer.

It is found in the cytoplasm. Its subcellular location is the nucleoid. Functionally, binds to DNA and alters its conformation. May be involved in regulation of gene expression, nucleoid organization and DNA protection. The polypeptide is Nucleoid-associated protein Ent638_0951 (Enterobacter sp. (strain 638)).